The chain runs to 275 residues: 3-methyl-2-oxobutanoate hydroxymethyltransferase (275 aa).

Residues Asp49 and Asp88 each contribute to the Mg(2+) site. Residues 49 to 50 (DS), Asp88, and Lys118 each bind 3-methyl-2-oxobutanoate. Glu120 is a binding site for Mg(2+). Glu187 functions as the Proton acceptor in the catalytic mechanism.

Belongs to the PanB family. As to quaternary structure, homodecamer; pentamer of dimers. The cofactor is Mg(2+).

The protein localises to the cytoplasm. The enzyme catalyses 3-methyl-2-oxobutanoate + (6R)-5,10-methylene-5,6,7,8-tetrahydrofolate + H2O = 2-dehydropantoate + (6S)-5,6,7,8-tetrahydrofolate. It functions in the pathway cofactor biosynthesis; (R)-pantothenate biosynthesis; (R)-pantoate from 3-methyl-2-oxobutanoate: step 1/2. Its function is as follows. Catalyzes the reversible reaction in which hydroxymethyl group from 5,10-methylenetetrahydrofolate is transferred onto alpha-ketoisovalerate to form ketopantoate. The sequence is that of 3-methyl-2-oxobutanoate hydroxymethyltransferase from Bartonella henselae (strain ATCC 49882 / DSM 28221 / CCUG 30454 / Houston 1) (Rochalimaea henselae).